The following is a 390-amino-acid chain: L-rhamnonate dehydratase (390 aa).

Substrate is bound by residues histidine 19 and arginine 45. Mg(2+) is bound by residues aspartate 211, glutamate 237, and glutamate 265. The active-site Proton acceptor is the histidine 315. Glutamate 335 contributes to the substrate binding site.

This sequence belongs to the mandelate racemase/muconate lactonizing enzyme family. RhamD subfamily. Mg(2+) is required as a cofactor.

It catalyses the reaction L-rhamnonate = 2-dehydro-3-deoxy-L-rhamnonate + H2O. In terms of biological role, catalyzes the dehydration of L-rhamnonate to 2-keto-3-deoxy-L-rhamnonate (KDR). In Saccharopolyspora erythraea (strain ATCC 11635 / DSM 40517 / JCM 4748 / NBRC 13426 / NCIMB 8594 / NRRL 2338), this protein is L-rhamnonate dehydratase.